The following is a 211-amino-acid chain: tRNA (guanine-N(7)-)-methyltransferase (211 aa).

S-adenosyl-L-methionine-binding residues include E43, E68, N95, and D117. Residue D117 is part of the active site. Residues K121, D153, and 190-193 (TEYE) contribute to the substrate site.

This sequence belongs to the class I-like SAM-binding methyltransferase superfamily. TrmB family.

It carries out the reaction guanosine(46) in tRNA + S-adenosyl-L-methionine = N(7)-methylguanosine(46) in tRNA + S-adenosyl-L-homocysteine. The protein operates within tRNA modification; N(7)-methylguanine-tRNA biosynthesis. Catalyzes the formation of N(7)-methylguanine at position 46 (m7G46) in tRNA. The sequence is that of tRNA (guanine-N(7)-)-methyltransferase from Alkaliphilus oremlandii (strain OhILAs) (Clostridium oremlandii (strain OhILAs)).